Reading from the N-terminus, the 600-residue chain is UvrABC system protein C (600 aa).

Positions 16–94 constitute a GIY-YIG domain; it reads EKPGCYQYFD…IKEYQPRYNV (79 aa). Positions 208 to 243 constitute a UVR domain; sequence HRLVRMYRDRMQAYSEELRFEEAQICKERIELLERY.

This sequence belongs to the UvrC family. Interacts with UvrB in an incision complex.

The protein resides in the cytoplasm. Functionally, the UvrABC repair system catalyzes the recognition and processing of DNA lesions. UvrC both incises the 5' and 3' sides of the lesion. The N-terminal half is responsible for the 3' incision and the C-terminal half is responsible for the 5' incision. This is UvrABC system protein C from Porphyromonas gingivalis (strain ATCC 33277 / DSM 20709 / CIP 103683 / JCM 12257 / NCTC 11834 / 2561).